Here is a 261-residue protein sequence, read N- to C-terminus: Phosphonates import ATP-binding protein PhnC (261 aa).

Residues 15–257 enclose the ABC transporter domain; that stretch reads LCLENTSAVY…LERSAIPPKR (243 aa). Position 48 to 55 (48 to 55) interacts with ATP; sequence GPSGSGKS.

Belongs to the ABC transporter superfamily. Phosphonates importer (TC 3.A.1.9.1) family. As to quaternary structure, the complex is composed of two ATP-binding proteins (PhnC), two transmembrane proteins (PhnE) and a solute-binding protein (PhnD).

It is found in the cell inner membrane. It catalyses the reaction phosphonate(out) + ATP + H2O = phosphonate(in) + ADP + phosphate + H(+). Functionally, part of the ABC transporter complex PhnCDE involved in phosphonates import. Responsible for energy coupling to the transport system. The sequence is that of Phosphonates import ATP-binding protein PhnC from Hyphomonas neptunium (strain ATCC 15444).